The chain runs to 551 residues: MAFNDLLKQVGGVGRFQLIQVTMVVAPLLLMASHNTLQNFTAAIPPHHCRPPANANLSKDGGLEAWLPLDKQGQPESCLRFTSPQWGPPFYNGTEANGTRVTEPCIDGWVYDNSTFPSTIVTEWNLVCSHRAFRQLAQSLYMVGVLLGAMVFGYLADRLGRRKVLILNYLQTAVSGTCAAYAPNYTVYCVFRLLSGMSLASIAINCMTLNVEWMPIHTRAYVGTLIGYVYSLGQFLLAGIAYAVPHWRHLQLVVSVPFFIAFIYSWFFIESARWYSSSGRLDLTLRALQRVARINGKQEEGAKLSIEVLRTSLQKELTLSKGQASAMELLRCPTLRHLFLCLSMLWFATSFAYYGLVMDLQGFGVSMYLIQVIFGAVDLPAKFVCFLVINSMGRRPAQMASLLLAGICILVNGIIPKSHTIIRTSLAVLGKGCLASSFNCIFLYTGELYPTVIRQTGLGMGSTMARVGSIVSPLVSMTAEFYPSMPLFIFGAVPVVASAVTALLPETLGQPLPDTVQDLKSRSRGKQNQQQQEQQKQMMPLQASTQEKNGL.

Topologically, residues methionine 1–glutamine 9 are cytoplasmic. The chain crosses the membrane as a helical span at residues valine 10–leucine 30. At methionine 31 to glutamine 135 the chain is on the extracellular side. 4 N-linked (GlcNAc...) asparagine glycosylation sites follow: asparagine 39, asparagine 56, asparagine 92, and asparagine 113. The helical transmembrane segment at leucine 136–alanine 156 threads the bilayer. Residues aspartate 157–valine 164 lie on the Cytoplasmic side of the membrane. Residues leucine 165–valine 187 form a helical membrane-spanning segment. The Extracellular segment spans residues tyrosine 188–serine 195. The helical transmembrane segment at glycine 196–isoleucine 216 threads the bilayer. Topologically, residues histidine 217–threonine 224 are cytoplasmic. A helical membrane pass occupies residues leucine 225–proline 245. The Extracellular portion of the chain corresponds to histidine 246–arginine 248. The helical transmembrane segment at histidine 249–isoleucine 269 threads the bilayer. The Cytoplasmic segment spans residues glutamate 270 to histidine 337. Residues leucine 338–methionine 358 traverse the membrane as a helical segment. Residues aspartate 359–tyrosine 368 lie on the Extracellular side of the membrane. A helical transmembrane segment spans residues leucine 369–isoleucine 389. Residues asparagine 390–arginine 395 lie on the Cytoplasmic side of the membrane. The helical transmembrane segment at proline 396–proline 416 threads the bilayer. Residues lysine 417–serine 425 are Extracellular-facing. Residues leucine 426–glycine 446 form a helical membrane-spanning segment. Residues glutamate 447–serine 484 lie on the Cytoplasmic side of the membrane. A helical transmembrane segment spans residues methionine 485–proline 505. Topologically, residues glutamate 506 to leucine 551 are extracellular. Residues aspartate 514–leucine 551 form a disordered region. The segment covering lysine 526–glutamine 537 has biased composition (low complexity). Residues glutamine 542 to leucine 551 are compositionally biased toward polar residues.

It belongs to the major facilitator (TC 2.A.1) superfamily. Organic cation transporter (TC 2.A.1.19) family. In terms of processing, glycosylated. Glycosylation is necessary for proper targeting of the transporter to the plasma membrane. In terms of tissue distribution, highly expressed in kidney; in the particular segment of the proximal tubule. In kidney, found preferentially in the cortex and outer medulla and weakly in the inner medulla. Expressed to a lower extent in brain.

The protein localises to the cell membrane. It is found in the basolateral cell membrane. The protein resides in the basal cell membrane. The enzyme catalyses (6R)-L-erythro-5,6,7,8-tetrahydrobiopterin(out) + a dicarboxylate(in) = (6R)-L-erythro-5,6,7,8-tetrahydrobiopterin(in) + a dicarboxylate(out). It carries out the reaction L-erythro-7,8-dihydrobiopterin(out) + a dicarboxylate(in) = L-erythro-7,8-dihydrobiopterin(in) + a dicarboxylate(out). The catalysed reaction is L-sepiapterin(out) + a dicarboxylate(in) = L-sepiapterin(in) + a dicarboxylate(out). It catalyses the reaction prostaglandin F2alpha(out) + a dicarboxylate(in) = prostaglandin F2alpha(in) + a dicarboxylate(out). The enzyme catalyses prostaglandin E2(out) + a dicarboxylate(in) = prostaglandin E2(in) + a dicarboxylate(out). It carries out the reaction 3',5'-cyclic AMP(out) + a dicarboxylate(in) = 3',5'-cyclic AMP(in) + a dicarboxylate(out). The catalysed reaction is 3',5'-cyclic GMP(out) + a dicarboxylate(in) = 3',5'-cyclic GMP(in) + a dicarboxylate(out). It catalyses the reaction urate(out) + a dicarboxylate(in) = urate(in) + a dicarboxylate(out). The enzyme catalyses kynurenate(out) + glutarate(in) = kynurenate(in) + glutarate(out). It carries out the reaction (indol-3-yl)acetate(out) + a dicarboxylate(in) = (indol-3-yl)acetate(in) + a dicarboxylate(out). The catalysed reaction is indoxyl sulfate(out) + a dicarboxylate(in) = indoxyl sulfate(in) + a dicarboxylate(out). It catalyses the reaction N-benzoylglycine(out) + a dicarboxylate(in) = N-benzoylglycine(in) + a dicarboxylate(out). The enzyme catalyses 3-carboxy-4-methyl-5-propyl-2-furanpropanoate(out) + a dicarboxylate(in) = 3-carboxy-4-methyl-5-propyl-2-furanpropanoate(in) + a dicarboxylate(out). Functionally, secondary active transporter that functions as a Na(+)-independent organic anion (OA)/dicarboxylate antiporter where the uptake of one molecule of OA into the cell is coupled with an efflux of one molecule of intracellular dicarboxylate such as alpha-ketoglutarate or glutarate. Mediates the uptake of OA across the basolateral side of proximal tubule epithelial cells, thereby contributing to the renal elimination of endogenous OA from the systemic circulation into the urine. Function as a biopterin transporters involved in the uptake and the secretion of coenzymes tetrahydrobiopterin (BH4) dihydrobiopterin (BH2) and sepiapterin to urine, thereby determining baseline levels of blood biopterins. Transports prostaglandin E2 (PGE2) and prostaglandin F2-alpha (PGF2-alpha) and may contribute to their renal excretion. Also mediates the uptake of cyclic nucleotides such as cAMP and cGMP. Involved in the transport of neuroactive tryptophan metabolites kynurenate (KYNA) and xanthurenate (XA) and may contribute to their secretion from the brain. May transport glutamate. Also involved in the disposition of uremic toxins and potentially toxic xenobiotics by the renal organic anion secretory pathway, helping reduce their undesired toxicological effects on the body. Uremic toxins include the indoxyl sulfate (IS), hippurate, indole acetate (IA), 3-carboxy-4- methyl-5-propyl-2-furanpropionate(CMPF) and urate. Xenobiotics include the mycotoxin ochratoxin (OTA). May also contribute to the transport of organic compounds in testes across the blood-testis-barrier. May also work as a bidirectional OA/dicarboxylate exchanger. This chain is Solute carrier family 22 member 6, found in Rattus norvegicus (Rat).